The sequence spans 172 residues: ATP synthase subunit b (172 aa).

The chain crosses the membrane as a helical span at residues 27-47 (LAIVIFGLYKFLPPFVGGILE).

It belongs to the ATPase B chain family. In terms of assembly, F-type ATPases have 2 components, F(1) - the catalytic core - and F(0) - the membrane proton channel. F(1) has five subunits: alpha(3), beta(3), gamma(1), delta(1), epsilon(1). F(0) has four main subunits: a(1), b(1), b'(1) and c(10-14). The alpha and beta chains form an alternating ring which encloses part of the gamma chain. F(1) is attached to F(0) by a central stalk formed by the gamma and epsilon chains, while a peripheral stalk is formed by the delta, b and b' chains.

The protein localises to the cellular thylakoid membrane. F(1)F(0) ATP synthase produces ATP from ADP in the presence of a proton or sodium gradient. F-type ATPases consist of two structural domains, F(1) containing the extramembraneous catalytic core and F(0) containing the membrane proton channel, linked together by a central stalk and a peripheral stalk. During catalysis, ATP synthesis in the catalytic domain of F(1) is coupled via a rotary mechanism of the central stalk subunits to proton translocation. In terms of biological role, component of the F(0) channel, it forms part of the peripheral stalk, linking F(1) to F(0). The sequence is that of ATP synthase subunit b from Prochlorococcus marinus (strain MIT 9303).